The primary structure comprises 498 residues: ATP synthase subunit beta, chloroplastic (498 aa).

172–179 (GGAGVGKT) contributes to the ATP binding site.

The protein belongs to the ATPase alpha/beta chains family. In terms of assembly, F-type ATPases have 2 components, CF(1) - the catalytic core - and CF(0) - the membrane proton channel. CF(1) has five subunits: alpha(3), beta(3), gamma(1), delta(1), epsilon(1). CF(0) has four main subunits: a(1), b(1), b'(1) and c(9-12).

It localises to the plastid. It is found in the chloroplast thylakoid membrane. The enzyme catalyses ATP + H2O + 4 H(+)(in) = ADP + phosphate + 5 H(+)(out). Functionally, produces ATP from ADP in the presence of a proton gradient across the membrane. The catalytic sites are hosted primarily by the beta subunits. This is ATP synthase subunit beta, chloroplastic from Nymphaea odorata (White water lily).